A 467-amino-acid polypeptide reads, in one-letter code: Endolysin PlyTW (467 aa).

In terms of domain architecture, Peptidase C51 spans 4–141; that stretch reads LKQAESYIKS…DYTGITHFIR (138 aa). Residues aspartate 20 and aspartate 22 each contribute to the Ca(2+) site. The For endopeptidase activity role is filled by cysteine 29. Aspartate 31 provides a ligand contact to Ca(2+). Active-site for endopeptidase activity residues include histidine 92 and glutamate 112. A disordered region spans residues 148–169; the sequence is SSVKKKDTKKKPKPSNRDGINK. The N-acetylmuramoyl-L-alanine amidase domain occupies 189-311; it reads NPVGVILHND…MEYYQTACPH (123 aa). Zn(2+)-binding residues include histidine 196, histidine 301, and cysteine 309. One can recognise an SH3b domain in the interval 385–455; sequence SESATFKCTA…WMPVRTWDKN (71 aa).

It belongs to the N-acetylmuramoyl-L-alanine amidase 2 family. Zn(2+) serves as cofactor.

The catalysed reaction is Hydrolyzes the link between N-acetylmuramoyl residues and L-amino acid residues in certain cell-wall glycopeptides.. In terms of biological role, endolysin that degrades host peptidoglycans and participates in the sequential events which lead to the programmed host cell lysis releasing the mature viral particles. The CHAP activity cleaves the peptidic bond between the D-alanine of the tetra-peptide stem and the first glycine of the penta-glycine cross-bridge. The N-acetyl-muramidase activity cleaves between N-acetylmuramic acid and N-acetylglucosamine bonds. The polypeptide is Endolysin PlyTW (plyTW) (Twortvirus twort (Bacteriophage Twort)).